A 455-amino-acid polypeptide reads, in one-letter code: Tumor necrosis factor receptor superfamily member 1A (455 aa).

The N-terminal stretch at 1–29 (MGLSTVPDLLLPLVLLELLVGIYPSGVIG) is a signal peptide. Over 30 to 211 (LVPHLGDREK…VKGTEDSGTT (182 aa)) the chain is Extracellular. TNFR-Cys repeat units lie at residues 43–82 (VCPQ…TDCR), 83–125 (ECES…DTVC), 126–166 (GCRK…NTVC), and 167–196 (TCHA…KLCL). 7 disulfides stabilise this stretch: cysteine 44/cysteine 58, cysteine 59/cysteine 72, cysteine 62/cysteine 81, cysteine 84/cysteine 99, cysteine 102/cysteine 117, cysteine 105/cysteine 125, and cysteine 127/cysteine 143. N-linked (GlcNAc...) asparagine glycosylation is present at asparagine 54. 2 N-linked (GlcNAc...) asparagine glycosylation sites follow: asparagine 145 and asparagine 151. 5 cysteine pairs are disulfide-bonded: cysteine 146–cysteine 158, cysteine 149–cysteine 166, cysteine 168–cysteine 179, cysteine 182–cysteine 195, and cysteine 185–cysteine 191. Residues 212–232 (VLLPLVIFFGLCLLSLLFIGL) traverse the membrane as a helical segment. Topologically, residues 233–455 (MYRYQRWKSK…ALPPAPSLLR (223 aa)) are cytoplasmic. A disordered region spans residues 254-273 (EKEGELEGTTTKPLAPNPSF). The interval 338-348 (LQKWEDSAHKP) is N-SMase activation domain (NSD). The Death domain maps to 356-441 (PATLYAVVEN…GCLEDIEEAL (86 aa)). A (Microbial infection) N-beta-linked (GlcNAc) arginine glycan is attached at arginine 376.

As to quaternary structure, binding of TNF to the extracellular domain leads to homotrimerization. The aggregated death domains provide a novel molecular interface that interacts specifically with the death domain of TRADD. Various TRADD-interacting proteins such as TRAFS, RIPK1 and possibly FADD, are recruited to the complex by their association with TRADD. This complex activates at least two distinct signaling cascades, apoptosis and NF-kappa-B signaling. Interacts with BAG4, BABAM2, FEM1B, GRB2, SQSTM1 and TRPC4AP. Interacts directly with NOL3 (via CARD domain); inhibits TNF-signaling pathway. Interacts with SH3RF2, TRADD and RIPK1. SH3RF2 facilitates the recruitment of RIPK1 and TRADD to TNFRSF1A in a TNF-alpha-dependent process. Interacts with PGLYRP1; this interaction is important for cell death induction. Interacts (via death domain) with MADD (via death domain). In terms of assembly, (Microbial infection) Interacts with mumps virus protein SH; this interaction inhibits downstream NF-kappa-B pathway activation. (Microbial infection) Interacts with HCV core protein. As to quaternary structure, (Microbial infection) Interacts with human cytomegalovirus/HHV-5 protein UL138. In terms of assembly, (Microbial infection) Interacts with host TNFRSF1A; this interaction leads to the stimulation of both surface expression and shedding of TNFRSF1A. Post-translationally, the soluble form is produced from the membrane form by proteolytic processing. In terms of processing, (Microbial infection) Glycosylated at Arg-376 by enteropathogenic E.coli protein NleB1 and S.typhimurium protein Ssek3: arginine GlcNAcylation prevents homotypic/heterotypic death domain interactions.

It is found in the cell membrane. The protein resides in the golgi apparatus membrane. It localises to the secreted. In terms of biological role, receptor for TNFSF2/TNF-alpha and homotrimeric TNFSF1/lymphotoxin-alpha. The adapter molecule FADD recruits caspase-8 to the activated receptor. The resulting death-inducing signaling complex (DISC) performs caspase-8 proteolytic activation which initiates the subsequent cascade of caspases (aspartate-specific cysteine proteases) mediating apoptosis. Contributes to the induction of non-cytocidal TNF effects including anti-viral state and activation of the acid sphingomyelinase. The polypeptide is Tumor necrosis factor receptor superfamily member 1A (TNFRSF1A) (Homo sapiens (Human)).